A 283-amino-acid chain; its full sequence is NAD kinase (283 aa).

The active-site Proton acceptor is the D65. NAD(+) contacts are provided by residues 65 to 66, 139 to 140, R150, R167, D169, 180 to 185, and Q239; these read DG, ND, and TGYSVS.

It belongs to the NAD kinase family. It depends on a divalent metal cation as a cofactor.

It localises to the cytoplasm. The enzyme catalyses NAD(+) + ATP = ADP + NADP(+) + H(+). Functionally, involved in the regulation of the intracellular balance of NAD and NADP, and is a key enzyme in the biosynthesis of NADP. Catalyzes specifically the phosphorylation on 2'-hydroxyl of the adenosine moiety of NAD to yield NADP. The chain is NAD kinase from Nitratidesulfovibrio vulgaris (strain DSM 19637 / Miyazaki F) (Desulfovibrio vulgaris).